The primary structure comprises 153 residues: Prophage Rz endopeptidase RzpD (153 aa).

Necessary for host cell lysis. It is believed to code for an endopeptidase that cleaves the amino-carboxyl cross-link between the diaminopimelic acid and D-alanine residues in the murein component of the bacterial cell wall. In Escherichia coli (strain K12), this protein is Prophage Rz endopeptidase RzpD (rzpD).